The following is a 159-amino-acid chain: Testis-specific XK-related protein, Y-linked (159 aa).

The next 3 membrane-spanning stretches (helical) occupy residues 1–21 (MFIF…VGAI), 45–65 (IYLM…LAFF), and 72–92 (GSLH…WLEF).

This sequence belongs to the XK family. Testis specific.

It localises to the membrane. The sequence is that of Testis-specific XK-related protein, Y-linked (XKRY) from Homo sapiens (Human).